An 833-amino-acid chain; its full sequence is Glycerol-3-phosphate acyltransferase (833 aa).

Positions 310–315 (HRSHID) match the HXXXXD motif motif.

The protein belongs to the GPAT/DAPAT family.

Its subcellular location is the cell inner membrane. The enzyme catalyses sn-glycerol 3-phosphate + an acyl-CoA = a 1-acyl-sn-glycero-3-phosphate + CoA. The protein operates within phospholipid metabolism; CDP-diacylglycerol biosynthesis; CDP-diacylglycerol from sn-glycerol 3-phosphate: step 1/3. This Pseudomonas syringae pv. tomato (strain ATCC BAA-871 / DC3000) protein is Glycerol-3-phosphate acyltransferase.